The sequence spans 267 residues: Hydroxyethylthiazole kinase (267 aa).

Residue Met42 participates in substrate binding. ATP is bound by residues Cys118 and Thr162. Residue Gly189 participates in substrate binding.

This sequence belongs to the Thz kinase family. Mg(2+) serves as cofactor.

It catalyses the reaction 5-(2-hydroxyethyl)-4-methylthiazole + ATP = 4-methyl-5-(2-phosphooxyethyl)-thiazole + ADP + H(+). Its pathway is cofactor biosynthesis; thiamine diphosphate biosynthesis; 4-methyl-5-(2-phosphoethyl)-thiazole from 5-(2-hydroxyethyl)-4-methylthiazole: step 1/1. In terms of biological role, catalyzes the phosphorylation of the hydroxyl group of 4-methyl-5-beta-hydroxyethylthiazole (THZ). This chain is Hydroxyethylthiazole kinase, found in Rubrobacter xylanophilus (strain DSM 9941 / JCM 11954 / NBRC 16129 / PRD-1).